A 309-amino-acid chain; its full sequence is Ribonuclease Z (309 aa).

His63, His65, Asp67, His68, His145, Asp216, and His274 together coordinate Zn(2+). Residue Asp67 is the Proton acceptor of the active site.

Belongs to the RNase Z family. Homodimer. The cofactor is Zn(2+).

It carries out the reaction Endonucleolytic cleavage of RNA, removing extra 3' nucleotides from tRNA precursor, generating 3' termini of tRNAs. A 3'-hydroxy group is left at the tRNA terminus and a 5'-phosphoryl group is left at the trailer molecule.. Zinc phosphodiesterase, which displays some tRNA 3'-processing endonuclease activity. Probably involved in tRNA maturation, by removing a 3'-trailer from precursor tRNA. This Streptococcus pneumoniae serotype 19F (strain G54) protein is Ribonuclease Z.